The primary structure comprises 189 residues: Elongation factor P (189 aa).

Belongs to the elongation factor P family.

The protein localises to the cytoplasm. The protein operates within protein biosynthesis; polypeptide chain elongation. Involved in peptide bond synthesis. Stimulates efficient translation and peptide-bond synthesis on native or reconstituted 70S ribosomes in vitro. Probably functions indirectly by altering the affinity of the ribosome for aminoacyl-tRNA, thus increasing their reactivity as acceptors for peptidyl transferase. The chain is Elongation factor P from Aster yellows witches'-broom phytoplasma (strain AYWB).